The chain runs to 102 residues: Small ribosomal subunit protein uS10 (102 aa).

It belongs to the universal ribosomal protein uS10 family. As to quaternary structure, part of the 30S ribosomal subunit.

Involved in the binding of tRNA to the ribosomes. This is Small ribosomal subunit protein uS10 from Streptococcus mutans serotype c (strain ATCC 700610 / UA159).